A 618-amino-acid polypeptide reads, in one-letter code: Dihydroxy-acid dehydratase 1 (618 aa).

Asp81 serves as a coordination point for Mg(2+). Cys122 contacts [2Fe-2S] cluster. Mg(2+)-binding residues include Asp123 and Lys124. Lys124 bears the N6-carboxylysine mark. Cys195 is a binding site for [2Fe-2S] cluster. Glu491 serves as a coordination point for Mg(2+). Residue Ser517 is the Proton acceptor of the active site.

The protein belongs to the IlvD/Edd family. In terms of assembly, homodimer. [2Fe-2S] cluster is required as a cofactor. Mg(2+) serves as cofactor.

It carries out the reaction (2R)-2,3-dihydroxy-3-methylbutanoate = 3-methyl-2-oxobutanoate + H2O. The catalysed reaction is (2R,3R)-2,3-dihydroxy-3-methylpentanoate = (S)-3-methyl-2-oxopentanoate + H2O. The protein operates within amino-acid biosynthesis; L-isoleucine biosynthesis; L-isoleucine from 2-oxobutanoate: step 3/4. It functions in the pathway amino-acid biosynthesis; L-valine biosynthesis; L-valine from pyruvate: step 3/4. Its function is as follows. Functions in the biosynthesis of branched-chain amino acids. Catalyzes the dehydration of (2R,3R)-2,3-dihydroxy-3-methylpentanoate (2,3-dihydroxy-3-methylvalerate) into 2-oxo-3-methylpentanoate (2-oxo-3-methylvalerate) and of (2R)-2,3-dihydroxy-3-methylbutanoate (2,3-dihydroxyisovalerate) into 2-oxo-3-methylbutanoate (2-oxoisovalerate), the penultimate precursor to L-isoleucine and L-valine, respectively. This Pseudoalteromonas translucida (strain TAC 125) protein is Dihydroxy-acid dehydratase 1.